The following is a 105-amino-acid chain: Nitrogen fixation nifHD region GlnB-like protein 1 (105 aa).

It belongs to the P(II) protein family.

Could be involved in the regulation of nitrogen fixation. The chain is Nitrogen fixation nifHD region GlnB-like protein 1 (glnBA) from Methanothermococcus thermolithotrophicus (Methanococcus thermolithotrophicus).